The following is a 142-amino-acid chain: Large ribosomal subunit protein uL11 (142 aa).

Belongs to the universal ribosomal protein uL11 family. As to quaternary structure, part of the ribosomal stalk of the 50S ribosomal subunit. Interacts with L10 and the large rRNA to form the base of the stalk. L10 forms an elongated spine to which L12 dimers bind in a sequential fashion forming a multimeric L10(L12)X complex. Post-translationally, one or more lysine residues are methylated.

In terms of biological role, forms part of the ribosomal stalk which helps the ribosome interact with GTP-bound translation factors. This is Large ribosomal subunit protein uL11 from Buchnera aphidicola subsp. Acyrthosiphon pisum (strain APS) (Acyrthosiphon pisum symbiotic bacterium).